Reading from the N-terminus, the 78-residue chain is Acyl carrier protein (78 aa).

The Carrier domain occupies 2–77; it reads SNIEQQVKKI…LAIDYINAHN (76 aa). O-(pantetheine 4'-phosphoryl)serine is present on serine 37.

It belongs to the acyl carrier protein (ACP) family. In terms of processing, 4'-phosphopantetheine is transferred from CoA to a specific serine of apo-ACP by AcpS. This modification is essential for activity because fatty acids are bound in thioester linkage to the sulfhydryl of the prosthetic group.

It localises to the cytoplasm. Its pathway is lipid metabolism; fatty acid biosynthesis. In terms of biological role, carrier of the growing fatty acid chain in fatty acid biosynthesis. This Neisseria meningitidis serogroup C / serotype 2a (strain ATCC 700532 / DSM 15464 / FAM18) protein is Acyl carrier protein.